Reading from the N-terminus, the 156-residue chain is Anaerobic nitrite reductase HB2 (156 aa).

The 150-residue stretch at 2 to 151 (GFTDKQEALV…LASAIKAEMH (150 aa)) folds into the Globin domain. The Homodimerization signature appears at 35–39 (EIAPV). The heme b site is built by S45, K59, H63, and H98. The short motif at 105-117 (DPHFEVVKEALLR) is the Homodimerization element.

The protein belongs to the plant globin family. As to quaternary structure, homodimer. It depends on heme b as a cofactor.

The protein localises to the cytoplasm. It is found in the nucleus. It carries out the reaction Fe(III)-heme b-[protein] + nitric oxide + H2O = Fe(II)-heme b-[protein] + nitrite + 2 H(+). In terms of biological role, phytoglobin that reduces nitrite to nitric oxide (NO) under anoxic conditions (e.g. during flooding or in waterlogged soil). May not function as an oxygen storage or transport protein. Has an unusually high affinity for O(2) through an hexacoordinate heme iron because of a very low dissociation constant. The protein is Anaerobic nitrite reductase HB2 of Solanum lycopersicum (Tomato).